Here is a 305-residue protein sequence, read N- to C-terminus: Methionyl-tRNA formyltransferase (305 aa).

Serine 111–proline 114 lines the (6S)-5,6,7,8-tetrahydrofolate pocket.

The protein belongs to the Fmt family.

It catalyses the reaction L-methionyl-tRNA(fMet) + (6R)-10-formyltetrahydrofolate = N-formyl-L-methionyl-tRNA(fMet) + (6S)-5,6,7,8-tetrahydrofolate + H(+). In terms of biological role, attaches a formyl group to the free amino group of methionyl-tRNA(fMet). The formyl group appears to play a dual role in the initiator identity of N-formylmethionyl-tRNA by promoting its recognition by IF2 and preventing the misappropriation of this tRNA by the elongation apparatus. This is Methionyl-tRNA formyltransferase from Wolinella succinogenes (strain ATCC 29543 / DSM 1740 / CCUG 13145 / JCM 31913 / LMG 7466 / NCTC 11488 / FDC 602W) (Vibrio succinogenes).